The primary structure comprises 157 residues: Ribosomal RNA large subunit methyltransferase H (157 aa).

Residues Leu73, Gly104, and 121-126 contribute to the S-adenosyl-L-methionine site; that span reads LSPLTL.

The protein belongs to the RNA methyltransferase RlmH family. As to quaternary structure, homodimer.

It is found in the cytoplasm. The enzyme catalyses pseudouridine(1915) in 23S rRNA + S-adenosyl-L-methionine = N(3)-methylpseudouridine(1915) in 23S rRNA + S-adenosyl-L-homocysteine + H(+). Specifically methylates the pseudouridine at position 1915 (m3Psi1915) in 23S rRNA. This chain is Ribosomal RNA large subunit methyltransferase H, found in Acidithiobacillus ferrooxidans (strain ATCC 23270 / DSM 14882 / CIP 104768 / NCIMB 8455) (Ferrobacillus ferrooxidans (strain ATCC 23270)).